The chain runs to 463 residues: Chaperone SurA (463 aa).

The N-terminal stretch at 1–25 is a signal peptide; the sequence is MTRYFSIVLSLLLAVSCVFLPVASA. PpiC domains lie at 175-277 and 291-390; these read GAQY…KLVE and ATEY…QRLG. The tract at residues 439-463 is disordered; sequence ADDHHTPSAAVTPATGAVLPAATKH.

It is found in the periplasm. It carries out the reaction [protein]-peptidylproline (omega=180) = [protein]-peptidylproline (omega=0). In terms of biological role, chaperone involved in the correct folding and assembly of outer membrane proteins. Recognizes specific patterns of aromatic residues and the orientation of their side chains, which are found more frequently in integral outer membrane proteins. May act in both early periplasmic and late outer membrane-associated steps of protein maturation. This is Chaperone SurA from Xylella fastidiosa (strain Temecula1 / ATCC 700964).